A 286-amino-acid polypeptide reads, in one-letter code: Transcription initiation factor IIA large subunit (286 aa).

3 disordered regions span residues 120–145, 167–195, and 208–236; these read NTVEATNNSGATLNTNTSGNTNADVT, TVENIDDESEKKDDEEKEEDVEKTRKEKE, and KRSALLDTDEVGSELDDSDDDYLISEGEE. A compositionally biased stretch (basic and acidic residues) spans 175–195; it reads SEKKDDEEKEEDVEKTRKEKE. The segment covering 214-236 has biased composition (acidic residues); the sequence is DTDEVGSELDDSDDDYLISEGEE.

Belongs to the TFIIA subunit 1 family. TFIIA is a heterodimer composed of the large TOA1 and a small TOA2 subunits. Interacts with KAP122.

Its subcellular location is the cytoplasm. It is found in the nucleus. Functionally, TFIIA is a component of the transcription machinery of RNA polymerase II and implicated in the regulation of basal transcription. Interacts with TBP (the TATA-binding protein). The sequence is that of Transcription initiation factor IIA large subunit (TOA1) from Saccharomyces cerevisiae (strain ATCC 204508 / S288c) (Baker's yeast).